The sequence spans 263 residues: Chaperone protein ClpE (263 aa).

The N-terminal stretch at 1–34 (MSKRNAVTTFFTNRVTKALGMTLALMMTCQSAMA) is a signal peptide. Positions 238 to 255 (QKKTPTSSGQKASDSLVN) are enriched in polar residues. Residues 238-263 (QKKTPTSSGQKASDSLVNPSDKADKK) form a disordered region.

The protein belongs to the periplasmic pilus chaperone family.

Its subcellular location is the periplasm. Involved in the biogenesis of the CS31A capsule-like antigen. The polypeptide is Chaperone protein ClpE (clpE) (Escherichia coli).